The following is a 537-amino-acid chain: 2-isopropylmalate synthase (537 aa).

Residues 8–273 (IIIFDTTLRD…FLGRPVDSME (266 aa)) form the Pyruvate carboxyltransferase domain. Residues aspartate 17, histidine 208, histidine 210, and asparagine 244 each contribute to the Mn(2+) site. The regulatory domain stretch occupies residues 408–537 (RLELVQVSCG…PSEPVLTSKN (130 aa)).

The protein belongs to the alpha-IPM synthase/homocitrate synthase family. LeuA type 1 subfamily. Homodimer. It depends on Mn(2+) as a cofactor.

The protein resides in the cytoplasm. It catalyses the reaction 3-methyl-2-oxobutanoate + acetyl-CoA + H2O = (2S)-2-isopropylmalate + CoA + H(+). The protein operates within amino-acid biosynthesis; L-leucine biosynthesis; L-leucine from 3-methyl-2-oxobutanoate: step 1/4. Its function is as follows. Catalyzes the condensation of the acetyl group of acetyl-CoA with 3-methyl-2-oxobutanoate (2-ketoisovalerate) to form 3-carboxy-3-hydroxy-4-methylpentanoate (2-isopropylmalate). This is 2-isopropylmalate synthase from Crocosphaera subtropica (strain ATCC 51142 / BH68) (Cyanothece sp. (strain ATCC 51142)).